We begin with the raw amino-acid sequence, 378 residues long: Erythronate-4-phosphate dehydrogenase (378 aa).

2 residues coordinate substrate: serine 45 and threonine 66. Residues aspartate 146 and threonine 175 each coordinate NAD(+). The active site involves arginine 208. Aspartate 232 serves as a coordination point for NAD(+). The active site involves glutamate 237. Residue histidine 254 is the Proton donor of the active site. An NAD(+)-binding site is contributed by glycine 257. Position 258 (tyrosine 258) interacts with substrate.

This sequence belongs to the D-isomer specific 2-hydroxyacid dehydrogenase family. PdxB subfamily. As to quaternary structure, homodimer.

It is found in the cytoplasm. The enzyme catalyses 4-phospho-D-erythronate + NAD(+) = (R)-3-hydroxy-2-oxo-4-phosphooxybutanoate + NADH + H(+). It participates in cofactor biosynthesis; pyridoxine 5'-phosphate biosynthesis; pyridoxine 5'-phosphate from D-erythrose 4-phosphate: step 2/5. Its function is as follows. Catalyzes the oxidation of erythronate-4-phosphate to 3-hydroxy-2-oxo-4-phosphonooxybutanoate. In Escherichia coli O7:K1 (strain IAI39 / ExPEC), this protein is Erythronate-4-phosphate dehydrogenase.